Consider the following 65-residue polypeptide: Large ribosomal subunit protein uL29 (65 aa).

The protein belongs to the universal ribosomal protein uL29 family.

The protein is Large ribosomal subunit protein uL29 of Psychrobacter arcticus (strain DSM 17307 / VKM B-2377 / 273-4).